The chain runs to 197 residues: Ras-related protein Rab-7B (197 aa).

GTP is bound by residues 14-21 (GEKSVGKT), 33-38 (VTLKPT), 57-61 (DTSGQ), 119-122 (NKID), and 152-153 (AK). The Effector region signature appears at 31–39 (RFVTLKPTI). S-geranylgeranyl cysteine attachment occurs at residues Cys-196 and Cys-197.

Belongs to the small GTPase superfamily. Rab family.

Its function is as follows. Protein transport. Probably involved in vesicular traffic. In Dictyostelium discoideum (Social amoeba), this protein is Ras-related protein Rab-7B (rab7B).